We begin with the raw amino-acid sequence, 348 residues long: Dual-specificity RNA methyltransferase RlmN (348 aa).

Catalysis depends on glutamate 94, which acts as the Proton acceptor. One can recognise a Radical SAM core domain in the interval 100-330; that stretch reads GKHNWTACIS…TAIIRASRGR (231 aa). Cysteine 107 and cysteine 336 are joined by a disulfide. Residues cysteine 114, cysteine 118, and cysteine 121 each contribute to the [4Fe-4S] cluster site. Residues 163 to 164, serine 195, 217 to 219, and asparagine 293 each bind S-adenosyl-L-methionine; these read GE and SLN. The active-site S-methylcysteine intermediate is the cysteine 336.

It belongs to the radical SAM superfamily. RlmN family. The cofactor is [4Fe-4S] cluster.

The protein localises to the cytoplasm. The enzyme catalyses adenosine(2503) in 23S rRNA + 2 reduced [2Fe-2S]-[ferredoxin] + 2 S-adenosyl-L-methionine = 2-methyladenosine(2503) in 23S rRNA + 5'-deoxyadenosine + L-methionine + 2 oxidized [2Fe-2S]-[ferredoxin] + S-adenosyl-L-homocysteine. It carries out the reaction adenosine(37) in tRNA + 2 reduced [2Fe-2S]-[ferredoxin] + 2 S-adenosyl-L-methionine = 2-methyladenosine(37) in tRNA + 5'-deoxyadenosine + L-methionine + 2 oxidized [2Fe-2S]-[ferredoxin] + S-adenosyl-L-homocysteine. Its function is as follows. Specifically methylates position 2 of adenine 2503 in 23S rRNA and position 2 of adenine 37 in tRNAs. m2A2503 modification seems to play a crucial role in the proofreading step occurring at the peptidyl transferase center and thus would serve to optimize ribosomal fidelity. This Syntrophus aciditrophicus (strain SB) protein is Dual-specificity RNA methyltransferase RlmN.